A 780-amino-acid polypeptide reads, in one-letter code: LPS-assembly protein LptD (780 aa).

The N-terminal stretch at 1 to 24 (MKKRFPTLLATLIWTALYSQHTLA) is a signal peptide.

Belongs to the LptD family. Component of the lipopolysaccharide transport and assembly complex. Interacts with LptE and LptA.

Its subcellular location is the cell outer membrane. Its function is as follows. Together with LptE, is involved in the assembly of lipopolysaccharide (LPS) at the surface of the outer membrane. The protein is LPS-assembly protein LptD of Yersinia pestis bv. Antiqua (strain Antiqua).